The chain runs to 367 residues: DNA replication and repair protein RecF (367 aa).

30-37 contributes to the ATP binding site; it reads GENAQGKT.

The protein belongs to the RecF family.

It localises to the cytoplasm. In terms of biological role, the RecF protein is involved in DNA metabolism; it is required for DNA replication and normal SOS inducibility. RecF binds preferentially to single-stranded, linear DNA. It also seems to bind ATP. The sequence is that of DNA replication and repair protein RecF from Chlamydia abortus (strain DSM 27085 / S26/3) (Chlamydophila abortus).